Consider the following 123-residue polypeptide: MARISGVDLPRDKRVEVALTYIYGIGRSSAKQLLEQVNVNPETRVRDLTEEEISRLRDLIDKEYKVEGDLRREVSLNIKRLIEIGSYRGLRHRRGLPVWGQRTRTNARTRKGPKKTVGVRRKK.

Residues 103-123 (TRTNARTRKGPKKTVGVRRKK) are disordered. The segment covering 105 to 123 (TNARTRKGPKKTVGVRRKK) has biased composition (basic residues).

Belongs to the universal ribosomal protein uS13 family. As to quaternary structure, part of the 30S ribosomal subunit. Forms a loose heterodimer with protein S19. Forms two bridges to the 50S subunit in the 70S ribosome.

Its function is as follows. Located at the top of the head of the 30S subunit, it contacts several helices of the 16S rRNA. In the 70S ribosome it contacts the 23S rRNA (bridge B1a) and protein L5 of the 50S subunit (bridge B1b), connecting the 2 subunits; these bridges are implicated in subunit movement. Contacts the tRNAs in the A and P-sites. The chain is Small ribosomal subunit protein uS13 from Desulforudis audaxviator (strain MP104C).